The primary structure comprises 120 residues: Aspartate 1-decarboxylase (120 aa).

The Schiff-base intermediate with substrate; via pyruvic acid role is filled by S25. Residue S25 is modified to Pyruvic acid (Ser). Position 57 (T57) interacts with substrate. The active-site Proton donor is the Y58. 73–75 (GAA) serves as a coordination point for substrate.

This sequence belongs to the PanD family. As to quaternary structure, heterooctamer of four alpha and four beta subunits. It depends on pyruvate as a cofactor. Is synthesized initially as an inactive proenzyme, which is activated by self-cleavage at a specific serine bond to produce a beta-subunit with a hydroxyl group at its C-terminus and an alpha-subunit with a pyruvoyl group at its N-terminus.

It is found in the cytoplasm. The catalysed reaction is L-aspartate + H(+) = beta-alanine + CO2. It functions in the pathway cofactor biosynthesis; (R)-pantothenate biosynthesis; beta-alanine from L-aspartate: step 1/1. Functionally, catalyzes the pyruvoyl-dependent decarboxylation of aspartate to produce beta-alanine. The sequence is that of Aspartate 1-decarboxylase from Coprothermobacter proteolyticus (strain ATCC 35245 / DSM 5265 / OCM 4 / BT).